A 454-amino-acid chain; its full sequence is MNLKEKNVLVIGFAVTGIPLVKVLCQLGANVIVNDSKKEEALKESMKLLSDHPIQYILGKHPEIEELSAPLDLVVVSPGVPLDIPFIENLRARGIEIIGEIELAYRLAQGHIVAITGTNGKTTTTSLVGEIFKNAGRRTHVVGNIGVAFISKALETTADDVIVIEASSFQLESIVDFRPQVGAILNLTPDHLNRHKTMENYQKAKFNIFKNQGAEDIAVINYDDVKLREESKQIYAKKVYFSRRTLLEEGVFVEDGKIVALKDGHKKEIISKDDIFIPGNHNLENALAATAMTLSLGVDIDVIQHTLKTFKGVEHRTEIVDVIHGVRFINDSKGTNPDASIKGIEGINTPILLIAGGYDKGSDFDEFINAFDGKVKHMFVYGETANTLMETAKKLNFIDVTKVQNLDEAVKKAYDIAIQGDTVLLSPACASWDMYENFEMRGKHFKEIVANLRR.

117–123 (GTNGKTT) provides a ligand contact to ATP.

The protein belongs to the MurCDEF family.

The protein resides in the cytoplasm. The enzyme catalyses UDP-N-acetyl-alpha-D-muramoyl-L-alanine + D-glutamate + ATP = UDP-N-acetyl-alpha-D-muramoyl-L-alanyl-D-glutamate + ADP + phosphate + H(+). Its pathway is cell wall biogenesis; peptidoglycan biosynthesis. Functionally, cell wall formation. Catalyzes the addition of glutamate to the nucleotide precursor UDP-N-acetylmuramoyl-L-alanine (UMA). The polypeptide is UDP-N-acetylmuramoylalanine--D-glutamate ligase (Alkaliphilus oremlandii (strain OhILAs) (Clostridium oremlandii (strain OhILAs))).